Reading from the N-terminus, the 462-residue chain is Trigger factor (462 aa).

A PPIase FKBP-type domain is found at G163–L248. The interval S442 to K462 is disordered. Residues A452–K462 are compositionally biased toward basic and acidic residues.

It belongs to the FKBP-type PPIase family. Tig subfamily.

It is found in the cytoplasm. It catalyses the reaction [protein]-peptidylproline (omega=180) = [protein]-peptidylproline (omega=0). Functionally, involved in protein export. Acts as a chaperone by maintaining the newly synthesized protein in an open conformation. Functions as a peptidyl-prolyl cis-trans isomerase. The protein is Trigger factor of Mycoplasmopsis synoviae (strain 53) (Mycoplasma synoviae).